A 213-amino-acid polypeptide reads, in one-letter code: Probable nicotinate-nucleotide adenylyltransferase (213 aa).

It belongs to the NadD family.

It carries out the reaction nicotinate beta-D-ribonucleotide + ATP + H(+) = deamido-NAD(+) + diphosphate. It functions in the pathway cofactor biosynthesis; NAD(+) biosynthesis; deamido-NAD(+) from nicotinate D-ribonucleotide: step 1/1. Functionally, catalyzes the reversible adenylation of nicotinate mononucleotide (NaMN) to nicotinic acid adenine dinucleotide (NaAD). The chain is Probable nicotinate-nucleotide adenylyltransferase from Escherichia coli O139:H28 (strain E24377A / ETEC).